Consider the following 343-residue polypeptide: Glyceraldehyde-3-phosphate dehydrogenase 1 (343 aa).

Residues 13-14 (RI), aspartate 35, arginine 79, and serine 121 each bind NAD(+). Residues 154–156 (SCT), threonine 185, 214–215 (TG), and arginine 237 contribute to the D-glyceraldehyde 3-phosphate site. Catalysis depends on cysteine 155, which acts as the Nucleophile. Asparagine 319 provides a ligand contact to NAD(+).

Belongs to the glyceraldehyde-3-phosphate dehydrogenase family. Homotetramer.

Its subcellular location is the cytoplasm. The enzyme catalyses D-glyceraldehyde 3-phosphate + phosphate + NAD(+) = (2R)-3-phospho-glyceroyl phosphate + NADH + H(+). It participates in carbohydrate degradation; glycolysis; pyruvate from D-glyceraldehyde 3-phosphate: step 1/5. Catalyzes the oxidative phosphorylation of glyceraldehyde 3-phosphate (G3P) to 1,3-bisphosphoglycerate (BPG) using the cofactor NAD. The first reaction step involves the formation of a hemiacetal intermediate between G3P and a cysteine residue, and this hemiacetal intermediate is then oxidized to a thioester, with concomitant reduction of NAD to NADH. The reduced NADH is then exchanged with the second NAD, and the thioester is attacked by a nucleophilic inorganic phosphate to produce BPG. The protein is Glyceraldehyde-3-phosphate dehydrogenase 1 (gap1) of Nostoc sp. (strain PCC 7120 / SAG 25.82 / UTEX 2576).